A 429-amino-acid polypeptide reads, in one-letter code: Protein arginine N-methyltransferase 2 (429 aa).

2 disordered regions span residues 41-76 (PEVARGQDPKTGESPLHAAIRSCGAPSEDDTPEDHE) and 137-180 (ALDS…EETP). Acidic residues predominate over residues 137-163 (ALDSDDEDDEEMAEGEEAQAEDGEEAP). The span at 164–174 (ELVAAEEATQT) shows a compositional bias: low complexity. An RMT2 domain is found at 190–429 (LEEQVTSDKY…YRLPVCTFLG (240 aa)). S-adenosyl-L-methionine contacts are provided by residues Y199, M228, 250–255 (FGMGII), 271–273 (EAH), 308–309 (WQ), and D328.

The protein belongs to the class I-like SAM-binding methyltransferase superfamily. RMT2 methyltransferase family. As to quaternary structure, monomer.

It localises to the cytoplasm. Its subcellular location is the nucleus. In terms of biological role, S-adenosyl-L-methionine-dependent protein-arginine N-methyltransferase that methylates the delta-nitrogen atom of arginine residues to form N5-methylarginine (type IV) in target proteins. Monomethylates ribosomal protein L12. The protein is Protein arginine N-methyltransferase 2 of Neurospora crassa (strain ATCC 24698 / 74-OR23-1A / CBS 708.71 / DSM 1257 / FGSC 987).